The sequence spans 254 residues: Cell division protein FtsQ (254 aa).

At 1-27 (MNILKRKTPQNIRFGEQKPKYYFHIRA) the chain is on the cytoplasmic side. Residues 28-48 (FAVLLGVFFLLGVYFNWQSIL) form a helical membrane-spanning segment. At 49–254 (EKMDDKPISA…AGAAVGMVDR (206 aa)) the chain is on the periplasmic side. Positions 54–124 (KPISAFALVG…NRLSIWVSEY (71 aa)) constitute a POTRA domain.

It belongs to the FtsQ/DivIB family. FtsQ subfamily. Part of a complex composed of FtsB, FtsL and FtsQ.

The protein resides in the cell inner membrane. Essential cell division protein. May link together the upstream cell division proteins, which are predominantly cytoplasmic, with the downstream cell division proteins, which are predominantly periplasmic. May control correct divisome assembly. The polypeptide is Cell division protein FtsQ (Haemophilus influenzae (strain ATCC 51907 / DSM 11121 / KW20 / Rd)).